The primary structure comprises 149 residues: Transcription factor Atoh7 (149 aa).

Positions 41-93 constitute a bHLH domain; it reads RRRLAANARERRRMQGLNTAFDRLRRVVPQWGQDKKLSKYETLQMALSYIIAL.

As to quaternary structure, forms a heterodimer with TCF3 isoform E47; interaction may be required for DNA-binding in certain situations. As to expression, expressed in retinal ganglion cells. Expressed in the cerebellum, trapezoid body, ventral nucleus of the lateral lamniscus and in areas of the auditory hindbrain such as the cochlear nucleus, lateral superior olive and medial nucleus of the trapezoid body. Expressed in the modiolar nerve root and in the cochlear in a small group of bushy neurons within the acoustic nerve. Expressed weakly in the sensory epithelia of the saccule and utricle.

The protein localises to the nucleus. It localises to the perikaryon. Its subcellular location is the cell projection. It is found in the axon. In terms of biological role, transcription factor that binds to DNA at the consensus sequence 5'-CAG[GC]TG-3'. Dimerization with TCF3 isoform E47 may be required in certain situations. Binds to gene promoters and enhancer elements, and thereby regulates a transcriptional program of retinal ganglion cell (RGC) determinant genes. Although the exact mechanism is not certain, retinal transcription regulation by ATOH7 has a role in RGC determination and survival, photoreceptor population development, targeting of RGC axons to the optic nerve and development of the retino-hypothalamic tract. Binds to its own promoter and enhancer sequences, suggesting autoregulation of ATOH7 transcription. Required for retinal circadian rhythm photoentrainment. Plays a role in brainstem auditory signaling and binaural processing. The sequence is that of Transcription factor Atoh7 from Mus musculus (Mouse).